A 120-amino-acid chain; its full sequence is NAD(P)H-quinone oxidoreductase subunit 3, chloroplastic (120 aa).

3 consecutive transmembrane segments (helical) span residues 9–29 (IFWA…LISG), 64–84 (MFAL…PWAM), and 88–108 (VLGV…IVGS).

This sequence belongs to the complex I subunit 3 family. In terms of assembly, NDH is composed of at least 16 different subunits, 5 of which are encoded in the nucleus.

Its subcellular location is the plastid. It localises to the chloroplast thylakoid membrane. The enzyme catalyses a plastoquinone + NADH + (n+1) H(+)(in) = a plastoquinol + NAD(+) + n H(+)(out). The catalysed reaction is a plastoquinone + NADPH + (n+1) H(+)(in) = a plastoquinol + NADP(+) + n H(+)(out). Functionally, NDH shuttles electrons from NAD(P)H:plastoquinone, via FMN and iron-sulfur (Fe-S) centers, to quinones in the photosynthetic chain and possibly in a chloroplast respiratory chain. The immediate electron acceptor for the enzyme in this species is believed to be plastoquinone. Couples the redox reaction to proton translocation, and thus conserves the redox energy in a proton gradient. The protein is NAD(P)H-quinone oxidoreductase subunit 3, chloroplastic of Calycanthus floridus var. glaucus (Eastern sweetshrub).